The sequence spans 250 residues: 5'-nucleotidase SurE (250 aa).

A divalent metal cation contacts are provided by Asp-8, Asp-9, Ser-39, and Asn-91.

The protein belongs to the SurE nucleotidase family. Requires a divalent metal cation as cofactor.

It localises to the cytoplasm. The catalysed reaction is a ribonucleoside 5'-phosphate + H2O = a ribonucleoside + phosphate. Functionally, nucleotidase that shows phosphatase activity on nucleoside 5'-monophosphates. This is 5'-nucleotidase SurE from Leptospira interrogans serogroup Icterohaemorrhagiae serovar copenhageni (strain Fiocruz L1-130).